Here is a 205-residue protein sequence, read N- to C-terminus: Protein GrpE (205 aa).

The interval 1 to 40 is disordered; the sequence is MSRKLHEEELTPEGMDAAQNADPAGDPVSENEGALPAAEP.

The protein belongs to the GrpE family. Homodimer.

It is found in the cytoplasm. Its function is as follows. Participates actively in the response to hyperosmotic and heat shock by preventing the aggregation of stress-denatured proteins, in association with DnaK and GrpE. It is the nucleotide exchange factor for DnaK and may function as a thermosensor. Unfolded proteins bind initially to DnaJ; upon interaction with the DnaJ-bound protein, DnaK hydrolyzes its bound ATP, resulting in the formation of a stable complex. GrpE releases ADP from DnaK; ATP binding to DnaK triggers the release of the substrate protein, thus completing the reaction cycle. Several rounds of ATP-dependent interactions between DnaJ, DnaK and GrpE are required for fully efficient folding. The sequence is that of Protein GrpE from Acidobacterium capsulatum (strain ATCC 51196 / DSM 11244 / BCRC 80197 / JCM 7670 / NBRC 15755 / NCIMB 13165 / 161).